Consider the following 498-residue polypeptide: NAD(P)H-quinone oxidoreductase chain 4, chloroplastic (498 aa).

Transmembrane regions (helical) follow at residues 4-24, 37-57, 80-100, 112-129, 134-154, 167-187, 208-228, 242-262, 272-292, 305-325, 330-350, 386-406, 416-436, and 463-483; these read FPWL…IVLF, YCIC…HFEL, FGID…TTLA, KLFY…LGTF, ILLF…LLSM, FILY…GMSL, ALEI…SPII, HYST…YGLV, AHSI…IYAA, IAYS…SISE, GAIL…FLAG, LALP…GIIT, ILIT…SLSI, and FISI…DFIF.

It belongs to the complex I subunit 4 family.

The protein resides in the plastid. It localises to the chloroplast thylakoid membrane. The catalysed reaction is a plastoquinone + NADH + (n+1) H(+)(in) = a plastoquinol + NAD(+) + n H(+)(out). The enzyme catalyses a plastoquinone + NADPH + (n+1) H(+)(in) = a plastoquinol + NADP(+) + n H(+)(out). This is NAD(P)H-quinone oxidoreductase chain 4, chloroplastic from Phaseolus vulgaris (Kidney bean).